Consider the following 193-residue polypeptide: Signal peptidase I (193 aa).

Residues 1–25 (MTEEQKPTSEKSVKRKSNTYWEWGK) are Cytoplasmic-facing. Residues 26-42 (AIIIAVALALLIRHFLF) form a helical membrane-spanning segment. The Extracellular segment spans residues 43 to 193 (EPYLVEGSSM…FPFHDMRQTK (151 aa)). Active-site residues include Ser51 and Lys93.

This sequence belongs to the peptidase S26 family.

It localises to the cell membrane. The catalysed reaction is Cleavage of hydrophobic, N-terminal signal or leader sequences from secreted and periplasmic proteins.. The chain is Signal peptidase I (sipS2) from Bacillus amyloliquefaciens (Bacillus velezensis).